Here is a 212-residue protein sequence, read N- to C-terminus: Large ribosomal subunit protein uL3 (212 aa).

Gln153 carries the post-translational modification N5-methylglutamine.

Belongs to the universal ribosomal protein uL3 family. Part of the 50S ribosomal subunit. Forms a cluster with proteins L14 and L19. In terms of processing, methylated by PrmB.

Its function is as follows. One of the primary rRNA binding proteins, it binds directly near the 3'-end of the 23S rRNA, where it nucleates assembly of the 50S subunit. This chain is Large ribosomal subunit protein uL3, found in Shewanella halifaxensis (strain HAW-EB4).